The primary structure comprises 396 residues: Ribosomal RNA large subunit methyltransferase I (396 aa).

A PUA domain is found at 2–81 (TVSIYLAKGR…EAIDKDFFVR (80 aa)).

It belongs to the methyltransferase superfamily. RlmI family.

It localises to the cytoplasm. The enzyme catalyses cytidine(1962) in 23S rRNA + S-adenosyl-L-methionine = 5-methylcytidine(1962) in 23S rRNA + S-adenosyl-L-homocysteine + H(+). In terms of biological role, specifically methylates the cytosine at position 1962 (m5C1962) of 23S rRNA. The protein is Ribosomal RNA large subunit methyltransferase I of Aliivibrio fischeri (strain MJ11) (Vibrio fischeri).